Reading from the N-terminus, the 789-residue chain is Tax1-binding protein 1 (789 aa).

3 positions are modified to phosphoserine: serine 124, serine 138, and serine 225. The stretch at 144–599 (TTKAGLLELK…LKRSLENPAE (456 aa)) forms a coiled coil. Residues 320-420 (EEIGRLQLCL…ELKLNAMKKD (101 aa)) are oligomerization. Residues 481–502 (TGNQQKVNDASVNTDPATSAST) are compositionally biased toward polar residues. The tract at residues 481-508 (TGNQQKVNDASVNTDPATSASTVDVKPS) is disordered. Residue serine 593 is modified to Phosphoserine; by IKKA. Residue serine 609 is modified to Phosphoserine. The tract at residues 639–660 (YASQETRDGADGAFYPDEIQRP) is disordered. The residue at position 666 (serine 666) is a Phosphoserine; by IKKA. The interval 678 to 712 (PARNFSRPDGLEDSEDSKEDENVPTAPDPPSQHLR) is disordered. 2 consecutive UBZ1-type zinc fingers follow at residues 727–753 (HKKC…VESH) and 754–780 (WKVC…VQTH). Zn(2+) contacts are provided by cysteine 730, cysteine 733, histidine 749, histidine 753, cysteine 757, cysteine 760, histidine 776, and histidine 780.

Homooligomer. Interacts with TNFAIP3. Interacts with STARD13. Interacts with MYO6. Interacts with TOM1; the interaction is indirect and is mediated by MYO6, which acts as a bridge between TOM1 and TAX1BP1. Interacts with MAVS; this interaction induces MAVS polyubiquitination. Interacts with TNIP1. Interacts with TRAF6; this interaction mediates deubiquitination of TRAF6 and inhibition of NF-kappa-B activation. Interacts with RIPK1; this interaction negatively regulates RIPK1 ubiquitination. Interacts with NBR1. Interacts with TBK1. Interacts with RB1CC1. Interacts with SQSTM1. Interacts with AZI2. Interacts with TICAM1 and TRIM32; these interactions target TICAM1 to TAX1BP1-mediated selective autophagic degradation. As to quaternary structure, (Microbial infection) Interacts with the HTLV-1 protein Tax. In terms of assembly, (Microbial infection) Interacts with Respiratory syncytial virus protein N; this interaction may promote viral growth by inhibiting the innate immune response. (Microbial infection) Interacts with Lassa virus protein Z. As to quaternary structure, (Microbial infection) Interacts with Mopeia virus protein Z. Post-translationally, phosphorylated in the C-terminal region by CHUK/IKKA leading to NF-kappa-B signaling down-regulation. Expressed in all tissues tested.

The protein localises to the cytoplasm. The protein resides in the mitochondrion. Its subcellular location is the preautophagosomal structure. It localises to the cytoplasmic vesicle. It is found in the autophagosome. Its function is as follows. Ubiquitin-binding adapter that participates in inflammatory, antiviral and innate immune processes as well as selective autophagy regulation. Plays a key role in the negative regulation of NF-kappa-B and IRF3 signalings by acting as an adapter for the ubiquitin-editing enzyme A20/TNFAIP3 to bind and inactivate its substrates. Disrupts the interactions between the E3 ubiquitin ligase TRAF3 and TBK1/IKBKE to attenuate 'Lys63'-linked polyubiquitination of TBK1 and thereby IFN-beta production. Also recruits A20/TNFAIP3 to ubiquitinated signaling proteins TRAF6 and RIPK1, leading to their deubiquitination and disruption of IL-1 and TNF-induced NF-kappa-B signaling pathways. Inhibits virus-induced apoptosis by inducing the 'Lys-48'-linked polyubiquitination and degradation of MAVS via recruitment of the E3 ligase ITCH, thereby attenuating MAVS-mediated apoptosis signaling. As a macroautophagy/autophagy receptor, facilitates the xenophagic clearance of pathogenic bacteria such as Salmonella typhimurium and Mycobacterium tuberculosis. Upon NBR1 recruitment to the SQSTM1-ubiquitin condensates, acts as the major recruiter of RB1CC1 to these ubiquitin condensates to promote their autophagic degradation. Mediates the autophagic degradation of other substrates including TICAM1. The chain is Tax1-binding protein 1 (TAX1BP1) from Homo sapiens (Human).